We begin with the raw amino-acid sequence, 325 residues long: TNFAIP3-interacting protein 3 (325 aa).

2 disordered regions span residues methionine 1–lysine 30 and arginine 84–glutamate 129. Residues serine 17–threonine 28 are compositionally biased toward basic and acidic residues. The stretch at serine 27–cysteine 265 forms a coiled coil. Positions histidine 190–alanine 248 are ubiquitin-binding domain (UBD).

As to quaternary structure, interacts with TNFAIP3. Interacts with polyubiquitin. As to expression, highly expressed in lung, lymph node, thymus and fetal liver. Expressed at lower levels in bone marrow, brain, kidney, spleen, leukocytes and tonsils. Could be detected in heart, salivary gland, adrenal gland, pancreas, ovary and fetal brain. High levels detected in liver, colon, small intestine, muscle, stomach, testis, placenta, thyroid, uterus, prostate, skin and PBL.

Binds to zinc finger protein TNFAIP3 and inhibits NF-kappa-B activation induced by tumor necrosis factor, Toll-like receptor 4 (TLR4), interleukin-1 and 12-O-tetradecanoylphorbol-13-acetate. Overexpression inhibits NF-kappa-B-dependent gene expression in response to lipopolysaccharide at a level downstream of TRAF6 and upstream of IKBKB. NF-kappa-B inhibition is independent of TNFAIP3 binding. In Homo sapiens (Human), this protein is TNFAIP3-interacting protein 3.